A 380-amino-acid polypeptide reads, in one-letter code: Guanine nucleotide-binding protein alpha-1 subunit (380 aa).

The tract at residues 1-25 (MGSSCSRSHSLSEAETTKNAKSADI) is disordered. Gly-2 carries the N-myristoyl glycine lipid modification. Cys-5 carries S-palmitoyl cysteine lipidation. Residues 10-25 (SLSEAETTKNAKSADI) show a composition bias toward basic and acidic residues. The 343-residue stretch at 38 to 380 (HIHKLLLLGA…ESMRRSREGT (343 aa)) folds into the G-alpha domain. Residues 41–54 (KLLLLGAGESGKST) form a G1 motif region. GTP-binding residues include Glu-49, Ser-50, Gly-51, Lys-52, Ser-53, Thr-54, Asp-163, Leu-188, Tyr-189, Thr-194, Gly-222, Asn-288, Lys-289, Asp-291, and Ala-356. Ser-53 serves as a coordination point for Mg(2+). A G2 motif region spans residues 186–194 (DVLYARVRT). A Mg(2+)-binding site is contributed by Thr-194. The tract at residues 215 to 224 (YRLYDVGGQR) is G3 motif. The G4 motif stretch occupies residues 284–291 (ILFLNKFD). A G5 motif region spans residues 354–359 (TTALDQ).

The protein belongs to the G-alpha family. As to quaternary structure, g proteins are composed of 3 units; alpha, beta and gamma. The alpha chain contains the guanine nucleotide binding site. Interacts with COLD1. Mg(2+) serves as cofactor.

The protein localises to the cell membrane. Its function is as follows. Guanine nucleotide-binding proteins (G proteins) are involved as modulators or transducers in various transmembrane signaling systems. May function in a signal transduction pathway required for normal growth and development of internodes, leaves, panicles and seeds. Involved in gibberellin signal transduction. Involved in R gene-mediated disease resistance. Functions upstream of the small GTPase RAC1 in the early steps of signaling. Involved in brassinosteroid response. May not be a signaling molecule in BRI1-mediated perception or transduction. This chain is Guanine nucleotide-binding protein alpha-1 subunit (GPA1), found in Oryza sativa subsp. indica (Rice).